The sequence spans 110 residues: Small ribosomal subunit protein bS18c (110 aa).

Belongs to the bacterial ribosomal protein bS18 family. As to quaternary structure, part of the 30S ribosomal subunit.

It is found in the plastid. Its subcellular location is the chloroplast. This Pisum sativum (Garden pea) protein is Small ribosomal subunit protein bS18c (rps18).